A 262-amino-acid polypeptide reads, in one-letter code: Ribosomal RNA small subunit methyltransferase A (262 aa).

S-adenosyl-L-methionine-binding residues include H19, L21, G44, E65, D90, and N109. Positions 218-246 are disordered; sequence LPNNLPGPLRERAEEALAGLGHGPDARAE.

It belongs to the class I-like SAM-binding methyltransferase superfamily. rRNA adenine N(6)-methyltransferase family. RsmA subfamily.

The protein resides in the cytoplasm. The enzyme catalyses adenosine(1518)/adenosine(1519) in 16S rRNA + 4 S-adenosyl-L-methionine = N(6)-dimethyladenosine(1518)/N(6)-dimethyladenosine(1519) in 16S rRNA + 4 S-adenosyl-L-homocysteine + 4 H(+). Its function is as follows. Specifically dimethylates two adjacent adenosines (A1518 and A1519) in the loop of a conserved hairpin near the 3'-end of 16S rRNA in the 30S particle. May play a critical role in biogenesis of 30S subunits. The sequence is that of Ribosomal RNA small subunit methyltransferase A from Rubrobacter xylanophilus (strain DSM 9941 / JCM 11954 / NBRC 16129 / PRD-1).